Here is a 158-residue protein sequence, read N- to C-terminus: 6,7-dimethyl-8-ribityllumazine synthase (158 aa).

Residues F23, 61-63 (SME), and 85-87 (AVI) contribute to the 5-amino-6-(D-ribitylamino)uracil site. A (2S)-2-hydroxy-3-oxobutyl phosphate-binding site is contributed by 90–91 (DT). Residue H93 is the Proton donor of the active site. Y118 is a binding site for 5-amino-6-(D-ribitylamino)uracil. R132 provides a ligand contact to (2S)-2-hydroxy-3-oxobutyl phosphate.

Belongs to the DMRL synthase family.

It catalyses the reaction (2S)-2-hydroxy-3-oxobutyl phosphate + 5-amino-6-(D-ribitylamino)uracil = 6,7-dimethyl-8-(1-D-ribityl)lumazine + phosphate + 2 H2O + H(+). It functions in the pathway cofactor biosynthesis; riboflavin biosynthesis; riboflavin from 2-hydroxy-3-oxobutyl phosphate and 5-amino-6-(D-ribitylamino)uracil: step 1/2. Functionally, catalyzes the formation of 6,7-dimethyl-8-ribityllumazine by condensation of 5-amino-6-(D-ribitylamino)uracil with 3,4-dihydroxy-2-butanone 4-phosphate. This is the penultimate step in the biosynthesis of riboflavin. The chain is 6,7-dimethyl-8-ribityllumazine synthase from Prochlorococcus marinus (strain MIT 9211).